A 175-amino-acid polypeptide reads, in one-letter code: tRNA (cytidine(56)-2'-O)-methyltransferase (175 aa).

Leucine 82 provides a ligand contact to S-adenosyl-L-methionine.

Belongs to the aTrm56 family. Homodimer.

Its subcellular location is the cytoplasm. The catalysed reaction is cytidine(56) in tRNA + S-adenosyl-L-methionine = 2'-O-methylcytidine(56) in tRNA + S-adenosyl-L-homocysteine + H(+). Its function is as follows. Specifically catalyzes the AdoMet-dependent 2'-O-ribose methylation of cytidine at position 56 in tRNAs. The protein is tRNA (cytidine(56)-2'-O)-methyltransferase of Cenarchaeum symbiosum (strain A).